We begin with the raw amino-acid sequence, 73 residues long: Venom protein 55.1 (73 aa).

The signal sequence occupies residues 1-19 (MNFLCILFVVSLISSLSKC). Pro57 carries the post-translational modification Proline amide. Positions 61–73 (RRSFDLYALVNAK) are excised as a propeptide.

The protein belongs to the diuretic hormone class 2 family. Expressed by the venom gland.

The protein resides in the secreted. In terms of biological role, regulates fluid secretion. This Lychas mucronatus (Chinese swimming scorpion) protein is Venom protein 55.1.